The chain runs to 513 residues: MISSDSRSSPGLARWAESYEAKCERRQETRENRRRRRNETTCRQPGKVLRTQHKERLQGARQLQFLKRRNLEEEKKGQAREQGPSSKTDGGTGQVSILKESLPGANKASFPGQQETGISSEVFPALHHSSSGIQRDLGGHHASHGRAFPPQDSDIKKPHRQHRGTQTKAEEALPTIKNDASQQTNCGVAVLDKDIIQLSEYLKEALHRELILKKKMVILQDLLPALIRASDSSWKGQLNEDKLKGKLRSLENQLYTCLQKHSPWGMKKVLLEMEDQRSSYEQKAKASLQKVLEEKMCAEQQLQRAQLSLALAEQKCQEWKSQYEALKEDWRTLGDQHRELESQLHVLQSKLQGADSRDSQMSQALQLLENEHQELQTKLESLQGDGEQQSSETQDLQDQLKKSEEEKQALVSKVQQLQSLLQNQSLQLQEQEKLLKKDQGLPVWNPKLSLDEVKPEGTRKEKEEELRDQLQKETFQLQVKENELQCGQWLPVLMVVIATALAVFLANKGNLVI.

Disordered stretches follow at residues 1–96, 130–171, and 381–402; these read MISS…GQVS, SSGI…KAEE, and SLQGDGEQQSSETQDLQDQLKK. The Cytoplasmic segment spans residues 1–485; sequence MISSDSRSSP…QLQVKENELQ (485 aa). Basic and acidic residues-rich tracts occupy residues 17-31 and 69-79; these read ESYEAKCERRQETRE and RNLEEEKKGQA. Residues 266–488 adopt a coiled-coil conformation; it reads MKKVLLEMED…VKENELQCGQ (223 aa). Over residues 386-397 the composition is skewed to polar residues; that stretch reads GEQQSSETQDLQ. The helical; Anchor for type IV membrane protein transmembrane segment at 486 to 506 threads the bilayer; sequence CGQWLPVLMVVIATALAVFLA. The Extracellular segment spans residues 507 to 513; that stretch reads NKGNLVI.

As to quaternary structure, interacts (via its coiled-coil domain) with TRAF3 (via isoleucine zipper). Interacts with MAP2K1. Interacts with PPP2CA; this interaction targets PPP2CA to the lysosomes. Interacts with MAVS. Interacts with TBK1. In terms of tissue distribution, expressed in bone marrow, spleen and thymus. Not detected in heart, kidney and liver.

It is found in the cell membrane. The protein localises to the golgi apparatus membrane. Its subcellular location is the lysosome membrane. The protein resides in the mitochondrion outer membrane. In terms of biological role, adapter protein that plays essential roles in both innate and adaptive immunity. Plays a crucial role in the regulation of thymocyte development. Mechanistically, mediates TCR-stimulated activation through recruiting MAP2K1/MEK1 to the Golgi and, thereby, facilitating the interaction of MAP2K1/MEK1 with its activator BRAF. Also plays an essential role in regulatory T-cell stability and function by recruiting the serine-threonine phosphatase catalytic subunit (PPP2CA) to the lysosome, thereby facilitating the interaction of PP2Ac with the mTORC1 component RPTOR and restricting glycolytic metabolism. Positively regulates TLR4 signaling activity in macrophage-mediated inflammation by acting as a molecular clamp to facilitate LPS-induced translocation of TLR4 to lipid rafts. In response to viral infection, facilitates the recruitment of TRAF3 to MAVS within mitochondria leading to IRF3 activation and interferon production. However, participates in the maintenance of immune homeostasis and the prevention of overzealous innate immunity by promoting 'Lys-48'-dependent ubiquitination of TBK1. This is TRAF3-interacting JNK-activating modulator (Traf3ip3) from Mus musculus (Mouse).